Consider the following 139-residue polypeptide: Ribonuclease P protein component (139 aa).

Residues 120–139 (KPTTGVEYSPKNEKCESVLP) are disordered. Basic and acidic residues predominate over residues 129–139 (PKNEKCESVLP).

The protein belongs to the RnpA family. In terms of assembly, consists of a catalytic RNA component (M1 or rnpB) and a protein subunit.

It carries out the reaction Endonucleolytic cleavage of RNA, removing 5'-extranucleotides from tRNA precursor.. In terms of biological role, RNaseP catalyzes the removal of the 5'-leader sequence from pre-tRNA to produce the mature 5'-terminus. It can also cleave other RNA substrates such as 4.5S RNA. The protein component plays an auxiliary but essential role in vivo by binding to the 5'-leader sequence and broadening the substrate specificity of the ribozyme. This is Ribonuclease P protein component from Chlamydia caviae (strain ATCC VR-813 / DSM 19441 / 03DC25 / GPIC) (Chlamydophila caviae).